The chain runs to 411 residues: MLDLKLLQNNFDEIAQKLKAKKVDENLLKELSDLFINLKKEKALLEEFQAFQNKFSKELATAQDKESLKAQLSQNKEKINAQSKIVNELEEKLGQIALAIPNTPDDCVPFGEDEDENVELKKVLTPPSFDFEIKEHHDLGEKLNWLDFTRGVKISQSRFCVLKNEGALLSRALVNYMIDFNRSRGFELVNVPFLVNGATMYGTGQLPKFKDDMYKVENDDLYLISTSEIPVTNLYSNEILTQEELPLKMTCYSACFRQEAGSAGKDTRGIIRQHQFEKVELVSICKPDQSELMFEEMLNCASDLLSSLGLAHRHLMLCTGDLGFSAAKTVDLEVWLPSQNKYREISSVSNCKDFQARRAKIRFKNDKGKNELVHTLNGSSLAVGRTLVAIMENYQEKDGNIRIPDVLRKYF.

226–228 (TSE) provides a ligand contact to L-serine. An ATP-binding site is contributed by 257 to 259 (RQE). Glutamate 280 lines the L-serine pocket. 344–347 (EISS) serves as a coordination point for ATP. Serine 379 lines the L-serine pocket.

It belongs to the class-II aminoacyl-tRNA synthetase family. Type-1 seryl-tRNA synthetase subfamily. Homodimer. The tRNA molecule binds across the dimer.

It localises to the cytoplasm. It carries out the reaction tRNA(Ser) + L-serine + ATP = L-seryl-tRNA(Ser) + AMP + diphosphate + H(+). The catalysed reaction is tRNA(Sec) + L-serine + ATP = L-seryl-tRNA(Sec) + AMP + diphosphate + H(+). The protein operates within aminoacyl-tRNA biosynthesis; selenocysteinyl-tRNA(Sec) biosynthesis; L-seryl-tRNA(Sec) from L-serine and tRNA(Sec): step 1/1. Catalyzes the attachment of serine to tRNA(Ser). Is also able to aminoacylate tRNA(Sec) with serine, to form the misacylated tRNA L-seryl-tRNA(Sec), which will be further converted into selenocysteinyl-tRNA(Sec). This chain is Serine--tRNA ligase, found in Campylobacter lari (strain RM2100 / D67 / ATCC BAA-1060).